The chain runs to 265 residues: Synaptoporin (265 aa).

Topologically, residues 1–4 are cytoplasmic; that stretch reads MCMV. Positions 1–202 constitute an MARVEL domain; it reads MCMVIFAPLF…NIWFVFKETG (202 aa). Residues 5–25 traverse the membrane as a helical segment; it reads IFAPLFAIFAFATCGGYSGGL. The Vesicular segment spans residues 26–81; the sequence is RLSVDCVNKTESNLSIDIAFAYPFRLHQVTFEVPTCEGKERQKLALIGDSSSSAEF. Residues asparagine 33 and asparagine 38 are each glycosylated (N-linked (GlcNAc...) asparagine). The helical transmembrane segment at 82–102 threads the bilayer; sequence FVTVAVFAFLYSLAATVVYIF. The Cytoplasmic portion of the chain corresponds to 103 to 114; it reads FQNKYRENNRGP. A helical membrane pass occupies residues 115-135; the sequence is LIDFIVTVVFSFLWLVGSSAW. The Vesicular portion of the chain corresponds to 136 to 177; the sequence is AKGLSDVKVATDPKEVLLLMSACKQPSNKCMAIHSPVMSSLN. A helical membrane pass occupies residues 178–198; the sequence is TSVVFGFLNFILWAGNIWFVF. The Cytoplasmic portion of the chain corresponds to 199-265; the sequence is KETGWHSSGQ…TGPTSFTNQI (67 aa). Tandem repeats lie at residues 210–214, 222–226, 227–231, 232–236, and 238–242. Residues 210 to 242 are 5 X approximate repeats; the sequence is YLSDPMEKHSSSYNQGGYNQDSYGSSSGYSQQA. Serine 212 is subject to Phosphoserine. The tract at residues 221-265 is disordered; it reads SYNQGGYNQDSYGSSSGYSQQASLGPTSDEFGQQPTGPTSFTNQI. A compositionally biased stretch (low complexity) spans 224–243; that stretch reads QGGYNQDSYGSSSGYSQQAS. Residues 244–265 are compositionally biased toward polar residues; the sequence is LGPTSDEFGQQPTGPTSFTNQI.

The protein belongs to the synaptophysin/synaptobrevin family.

It is found in the cytoplasmic vesicle. The protein resides in the secretory vesicle. The protein localises to the synaptic vesicle membrane. Its subcellular location is the synapse. It localises to the synaptosome. Functionally, intrinsic membrane protein of small synaptic vesicles. Probable vesicular channel protein. The chain is Synaptoporin (SYNPR) from Homo sapiens (Human).